Consider the following 104-residue polypeptide: Phosphoribosyl-ATP pyrophosphatase (104 aa).

Belongs to the PRA-PH family.

It is found in the cytoplasm. It carries out the reaction 1-(5-phospho-beta-D-ribosyl)-ATP + H2O = 1-(5-phospho-beta-D-ribosyl)-5'-AMP + diphosphate + H(+). It participates in amino-acid biosynthesis; L-histidine biosynthesis; L-histidine from 5-phospho-alpha-D-ribose 1-diphosphate: step 2/9. This chain is Phosphoribosyl-ATP pyrophosphatase, found in Methanoregula boonei (strain DSM 21154 / JCM 14090 / 6A8).